A 457-amino-acid polypeptide reads, in one-letter code: MDQDACTHSAALILAAGKGTRMCSNKPKVLHTLLGEPLLFHVISALRPLFGSNIWVVIGHGSSLIQSICSDLSLNFIYQEKQLGTANAVSIALPVLQQSRIKRLMVINGDMPLITSDLLECIIKKSDKTDFVFATLKLPLPNDYGRILRREGKIYSIIEAKDIEPSLQHDTTVEVNAGLYYFSLEVVDKCLPMIKNENKSQEYYFTDIIELAVENGYLVDSIYFEEDWHFLGVNTPKDLSYVESIQQAFIIEKLLQSGVIIHSPESVRISPFATIEPGVEIYGPCEIYGASYIASGSIIYSHSWIKNTTISHDVCIYSFCHLDTVIIKDKCSIGPYARLRPGCHLEEQVCIGNFVEIKKTQLGKHVKINHLSYIGDAIVGDESNIGAGTITCNYDGENKHHTFIGKKAFIGSNTALVAPLTIGEKSLIGAGSVIIRDVPENMVSIARGKQKNFSKRK.

Positions 1–236 (MDQDACTHSA…DWHFLGVNTP (236 aa)) are pyrophosphorylase. Residues 14–17 (LAAG), lysine 28, glutamine 79, and 84–85 (GT) contribute to the UDP-N-acetyl-alpha-D-glucosamine site. Aspartate 110 serves as a coordination point for Mg(2+). Residues glycine 145, glutamate 159, asparagine 176, and asparagine 234 each coordinate UDP-N-acetyl-alpha-D-glucosamine. Position 234 (asparagine 234) interacts with Mg(2+). The linker stretch occupies residues 237–257 (KDLSYVESIQQAFIIEKLLQS). The N-acetyltransferase stretch occupies residues 258-457 (GVIIHSPESV…GKQKNFSKRK (200 aa)). Arginine 340 and lysine 358 together coordinate UDP-N-acetyl-alpha-D-glucosamine. The active-site Proton acceptor is histidine 370. Positions 373 and 384 each coordinate UDP-N-acetyl-alpha-D-glucosamine. Residues alanine 387, 393–394 (NY), serine 412, alanine 430, and arginine 447 each bind acetyl-CoA.

It in the N-terminal section; belongs to the N-acetylglucosamine-1-phosphate uridyltransferase family. In the C-terminal section; belongs to the transferase hexapeptide repeat family. In terms of assembly, homotrimer. Mg(2+) serves as cofactor.

The protein localises to the cytoplasm. The catalysed reaction is alpha-D-glucosamine 1-phosphate + acetyl-CoA = N-acetyl-alpha-D-glucosamine 1-phosphate + CoA + H(+). The enzyme catalyses N-acetyl-alpha-D-glucosamine 1-phosphate + UTP + H(+) = UDP-N-acetyl-alpha-D-glucosamine + diphosphate. It participates in nucleotide-sugar biosynthesis; UDP-N-acetyl-alpha-D-glucosamine biosynthesis; N-acetyl-alpha-D-glucosamine 1-phosphate from alpha-D-glucosamine 6-phosphate (route II): step 2/2. It functions in the pathway nucleotide-sugar biosynthesis; UDP-N-acetyl-alpha-D-glucosamine biosynthesis; UDP-N-acetyl-alpha-D-glucosamine from N-acetyl-alpha-D-glucosamine 1-phosphate: step 1/1. Its pathway is bacterial outer membrane biogenesis; LPS lipid A biosynthesis. Functionally, catalyzes the last two sequential reactions in the de novo biosynthetic pathway for UDP-N-acetylglucosamine (UDP-GlcNAc). The C-terminal domain catalyzes the transfer of acetyl group from acetyl coenzyme A to glucosamine-1-phosphate (GlcN-1-P) to produce N-acetylglucosamine-1-phosphate (GlcNAc-1-P), which is converted into UDP-GlcNAc by the transfer of uridine 5-monophosphate (from uridine 5-triphosphate), a reaction catalyzed by the N-terminal domain. This chain is Bifunctional protein GlmU, found in Lawsonia intracellularis (strain PHE/MN1-00).